Here is a 145-residue protein sequence, read N- to C-terminus: Endoribonuclease YbeY (145 aa).

3 residues coordinate Zn(2+): His-109, His-113, and His-119.

The protein belongs to the endoribonuclease YbeY family. The cofactor is Zn(2+).

Its subcellular location is the cytoplasm. Its function is as follows. Single strand-specific metallo-endoribonuclease involved in late-stage 70S ribosome quality control and in maturation of the 3' terminus of the 16S rRNA. The sequence is that of Endoribonuclease YbeY from Ruthia magnifica subsp. Calyptogena magnifica.